The chain runs to 153 residues: MAKSTVVEKVTEAVAPIVEEAKLELVDVEYVKEGGNWYLRIFIDKPGGIELDDCQGVSEKIDTLLDEIDPVPQAYFLEVSSPGIERPLKKPQDFEKFNGHLVNITTFAPINGSKNFIGKLLDYNEEGIHLEIKGKQVVLPHQQVATARLAVEI.

The protein belongs to the RimP family.

The protein resides in the cytoplasm. In terms of biological role, required for maturation of 30S ribosomal subunits. This chain is Ribosome maturation factor RimP, found in Desulforamulus reducens (strain ATCC BAA-1160 / DSM 100696 / MI-1) (Desulfotomaculum reducens).